Here is an 885-residue protein sequence, read N- to C-terminus: Leucine--tRNA ligase (885 aa).

The 'HIGH' region motif lies at 48–58 (PYPSGKLHMGH). Positions 639–643 (TMSKS) match the 'KMSKS' region motif. Lysine 642 provides a ligand contact to ATP.

The protein belongs to the class-I aminoacyl-tRNA synthetase family.

The protein localises to the cytoplasm. It carries out the reaction tRNA(Leu) + L-leucine + ATP = L-leucyl-tRNA(Leu) + AMP + diphosphate. This Bordetella pertussis (strain Tohama I / ATCC BAA-589 / NCTC 13251) protein is Leucine--tRNA ligase.